We begin with the raw amino-acid sequence, 300 residues long: Mycothiol acetyltransferase (300 aa).

N-acetyltransferase domains follow at residues 4-140 (IDWR…RPLT) and 151-300 (VRLA…AVAD). 1D-myo-inositol 2-(L-cysteinylamino)-2-deoxy-alpha-D-glucopyranoside is bound at residue Asp36. 79-81 (LVV) contacts acetyl-CoA. 1D-myo-inositol 2-(L-cysteinylamino)-2-deoxy-alpha-D-glucopyranoside is bound by residues Glu178, Lys219, and Glu227. Residue 231–233 (VGV) coordinates acetyl-CoA. Residue Tyr269 coordinates 1D-myo-inositol 2-(L-cysteinylamino)-2-deoxy-alpha-D-glucopyranoside. Acetyl-CoA is bound at residue 274-279 (NGAAVK).

The protein belongs to the acetyltransferase family. MshD subfamily. Monomer.

The enzyme catalyses 1D-myo-inositol 2-(L-cysteinylamino)-2-deoxy-alpha-D-glucopyranoside + acetyl-CoA = mycothiol + CoA + H(+). Functionally, catalyzes the transfer of acetyl from acetyl-CoA to desacetylmycothiol (Cys-GlcN-Ins) to form mycothiol. This is Mycothiol acetyltransferase from Mycobacterium sp. (strain MCS).